The chain runs to 312 residues: Thioredoxin reductase (312 aa).

33–43 contributes to the FAD binding site; that stretch reads EGFFSGIAGGQ. A disulfide bridge links cysteine 138 with cysteine 141. 283-292 is a binding site for FAD; it reads DVQDKYYRQA.

It belongs to the class-II pyridine nucleotide-disulfide oxidoreductase family. Homodimer. FAD is required as a cofactor.

It is found in the cytoplasm. The catalysed reaction is [thioredoxin]-dithiol + NADP(+) = [thioredoxin]-disulfide + NADPH + H(+). The polypeptide is Thioredoxin reductase (trxB) (Chlamydia trachomatis serovar D (strain ATCC VR-885 / DSM 19411 / UW-3/Cx)).